Consider the following 122-residue polypeptide: Large ribosomal subunit protein uL14 (122 aa).

This sequence belongs to the universal ribosomal protein uL14 family. As to quaternary structure, part of the 50S ribosomal subunit. Forms a cluster with proteins L3 and L19. In the 70S ribosome, L14 and L19 interact and together make contacts with the 16S rRNA in bridges B5 and B8.

Functionally, binds to 23S rRNA. Forms part of two intersubunit bridges in the 70S ribosome. This chain is Large ribosomal subunit protein uL14, found in Desulfosudis oleivorans (strain DSM 6200 / JCM 39069 / Hxd3) (Desulfococcus oleovorans).